The chain runs to 265 residues: DNA repair protein RecO (265 aa).

This sequence belongs to the RecO family.

Its function is as follows. Involved in DNA repair and RecF pathway recombination. In Mycobacterium marinum (strain ATCC BAA-535 / M), this protein is DNA repair protein RecO.